Consider the following 335-residue polypeptide: MAVKVGINGFGRIGRNVFRAALKNPDIEVVAVNDLTDANTLAHLLKYDSVHGRLDAEVSVNGNNLVVNGKEIIVKAERDPENLAWGEIGVDIVVESTGRFTKREDAAKHLEAGAKKVIISAPAKNEDITIVMGVNQDKYDPKAHHVISNASCTTNCLAPFAKVLHEQFGIVRGMMTTVHSYTNDQRILDLPHKDLRRARAAAESIIPTTTGAAKAVALVLPELKGKLNGMAMRVPTPNVSVVDLVAELEKEVTVEEVNAALKAAAEGELKGILAYSEEPLVSRDYNGSTVSSTIDALSTMVIDGKMVKVVSWYDNETGYSHRVVDLAAYIASKGL.

Residues 12–13 (RI), Asp34, Arg78, and Ser120 each bind NAD(+). D-glyceraldehyde 3-phosphate is bound by residues 151 to 153 (SCT) and Thr182. Cys152 serves as the catalytic Nucleophile. An NAD(+)-binding site is contributed by Asn183. Residues Arg197, 210-211 (TG), and Arg233 contribute to the D-glyceraldehyde 3-phosphate site. An NAD(+)-binding site is contributed by Asn315.

The protein belongs to the glyceraldehyde-3-phosphate dehydrogenase family. As to quaternary structure, homotetramer.

The protein localises to the cytoplasm. The catalysed reaction is D-glyceraldehyde 3-phosphate + phosphate + NAD(+) = (2R)-3-phospho-glyceroyl phosphate + NADH + H(+). It functions in the pathway carbohydrate degradation; glycolysis; pyruvate from D-glyceraldehyde 3-phosphate: step 1/5. Its function is as follows. Catalyzes the oxidative phosphorylation of glyceraldehyde 3-phosphate (G3P) to 1,3-bisphosphoglycerate (BPG) using the cofactor NAD. The first reaction step involves the formation of a hemiacetal intermediate between G3P and a cysteine residue, and this hemiacetal intermediate is then oxidized to a thioester, with concomitant reduction of NAD to NADH. The reduced NADH is then exchanged with the second NAD, and the thioester is attacked by a nucleophilic inorganic phosphate to produce BPG. The sequence is that of Glyceraldehyde-3-phosphate dehydrogenase (gap) from Geobacillus stearothermophilus (Bacillus stearothermophilus).